Reading from the N-terminus, the 197-residue chain is Guanylate kinase (197 aa).

Residue serine 2 is modified to N-acetylserine. A Guanylate kinase-like domain is found at 4 to 186 (PRPVVLSGPS…AYAELKEALS (183 aa)). 14–19 (GAGKST) serves as a coordination point for ATP. Residue 37–51 (SHTTRNPRPGEENGK) coordinates substrate. Catalysis depends on residues arginine 44, arginine 137, and arginine 148. Arginine 137 contacts ATP. Residue 171–172 (ND) participates in ATP binding.

It belongs to the guanylate kinase family. In terms of assembly, monomer. Interacts with RD3. As to expression, widely expressed.

Its subcellular location is the photoreceptor inner segment. It localises to the cytoplasm. The protein resides in the cytosol. It is found in the mitochondrion. The enzyme catalyses GMP + ATP = GDP + ADP. With respect to regulation, up-regulated by RD3. Its function is as follows. Catalyzes the phosphorylation of GMP to GDP. Essential enzyme for recycling GMP and indirectly, cyclic GMP (cGMP). Involved in the cGMP metabolism in photoreceptors. It may also have a role in the survival and growth progression of some tumors. In addition to its physiological role, GUK1 is essential for converting prodrugs used for the treatment of cancers and viral infections into their pharmacologically active metabolites, most notably acyclovir, ganciclovir, and 6-thioguanine and its closely related analog 6-mercaptopurine. The protein is Guanylate kinase of Homo sapiens (Human).